Reading from the N-terminus, the 547-residue chain is Inositol-tetrakisphosphate 1-kinase 6 (547 aa).

A 1D-myo-inositol 1,3,4-trisphosphate-binding site is contributed by lysine 263. ATP is bound by residues arginine 317 and lysine 370. The ATP-grasp domain maps to leucine 327 to glutamate 539. 1D-myo-inositol 1,3,4-trisphosphate-binding residues include histidine 381 and lysine 415. ATP is bound by residues glutamine 404–lysine 415, serine 430, and serine 450. Mg(2+) contacts are provided by aspartate 497, aspartate 511, and asparagine 513. Asparagine 513 and serine 517 together coordinate 1D-myo-inositol 1,3,4-trisphosphate.

Belongs to the ITPK1 family. Monomer. Mg(2+) is required as a cofactor.

It catalyses the reaction 1D-myo-inositol 3,4,5,6-tetrakisphosphate + ATP = 1D-myo-inositol 1,3,4,5,6-pentakisphosphate + ADP + H(+). The catalysed reaction is 1D-myo-inositol 1,3,4-trisphosphate + ATP = 1D-myo-inositol 1,3,4,5-tetrakisphosphate + ADP + H(+). It carries out the reaction 1D-myo-inositol 1,3,4-trisphosphate + ATP = 1D-myo-inositol 1,3,4,6-tetrakisphosphate + ADP + H(+). Kinase that can phosphorylate various inositol polyphosphate such as Ins(3,4,5,6)P4 or Ins(1,3,4)P3 and participates in phytic acid biosynthesis in developing seeds. Phytic acid is the primary storage form of phosphorus in cereal grains and other plant seeds. The sequence is that of Inositol-tetrakisphosphate 1-kinase 6 from Oryza sativa subsp. indica (Rice).